The chain runs to 438 residues: Aspartate--tRNA(Asp/Asn) ligase (438 aa).

Glu-176 lines the L-aspartate pocket. Positions 198–201 (QLYK) are aspartate. Residue Arg-220 participates in L-aspartate binding. ATP is bound by residues 220–222 (RAE), 228–230 (RHL), and Glu-361. Mg(2+) is bound by residues Glu-361 and Ser-364. The L-aspartate site is built by Ser-364 and Arg-368. An ATP-binding site is contributed by 409–412 (GADR).

It belongs to the class-II aminoacyl-tRNA synthetase family. Type 2 subfamily. In terms of assembly, homodimer. Requires Mg(2+) as cofactor.

It localises to the cytoplasm. It carries out the reaction tRNA(Asx) + L-aspartate + ATP = L-aspartyl-tRNA(Asx) + AMP + diphosphate. Its function is as follows. Aspartyl-tRNA synthetase with relaxed tRNA specificity since it is able to aspartylate not only its cognate tRNA(Asp) but also tRNA(Asn). Reaction proceeds in two steps: L-aspartate is first activated by ATP to form Asp-AMP and then transferred to the acceptor end of tRNA(Asp/Asn). In Methanococcus vannielii (strain ATCC 35089 / DSM 1224 / JCM 13029 / OCM 148 / SB), this protein is Aspartate--tRNA(Asp/Asn) ligase.